The primary structure comprises 236 residues: Protein YIPF6 (236 aa).

The residue at position 2 (A2) is an N-acetylalanine. The Cytoplasmic segment spans residues 2 to 84; that stretch reads AEAEDSPGEQ…HVLYPRKSNT (83 aa). At S7 the chain carries Phosphoserine. The chain crosses the membrane as a helical span at residues 85 to 105; that stretch reads LLRDWDLWGPLILCVSLALML. At 106-116 the chain is on the lumenal side; it reads QKSSVEGKRDG. The chain crosses the membrane as a helical span at residues 117 to 137; it reads GSPEFAEVFVIIWFGAVTITL. The Cytoplasmic segment spans residues 138–147; it reads NSKLLGGNIS. Residues 148–168 form a helical membrane-spanning segment; the sequence is FFQSLCVLGYCVLPLNIAMLI. Topologically, residues 169 to 185 are lumenal; it reads CRLLLLAGQGPINFMIR. A helical transmembrane segment spans residues 186 to 206; the sequence is LFVVLVMFAWSVIASTAFLAD. Residues 207–213 lie on the Cytoplasmic side of the membrane; the sequence is CQPPNRK. A helical membrane pass occupies residues 214–234; the sequence is ALAVYPVFLFYFVVSWMILTF. Residues 235–236 lie on the Lumenal side of the membrane; it reads TP.

It belongs to the YIP1 family. In terms of assembly, predominantly interacts with YIPF1 or YIPF2, but may also form a ternary complex with YIPF1 and YIPF2. This interaction may stabilize YIPF1 and YIPF2.

The protein resides in the golgi apparatus membrane. In terms of biological role, may be required for stable YIPF1 and YIPF2 protein expression. The sequence is that of Protein YIPF6 (Yipf6) from Rattus norvegicus (Rat).